A 101-amino-acid chain; its full sequence is NAD(P)H-quinone oxidoreductase subunit 4L, chloroplastic (101 aa).

3 helical membrane-spanning segments follow: residues 2–22 (MFEYALVLSSYLFSMGIYGLI), 32–52 (MCLELILNAVNMNLVTFSDLF), and 61–81 (IFSIFVIAIAAAEAAIGPAIV).

Belongs to the complex I subunit 4L family. In terms of assembly, NDH is composed of at least 16 different subunits, 5 of which are encoded in the nucleus.

The protein resides in the plastid. The protein localises to the chloroplast thylakoid membrane. It carries out the reaction a plastoquinone + NADH + (n+1) H(+)(in) = a plastoquinol + NAD(+) + n H(+)(out). The catalysed reaction is a plastoquinone + NADPH + (n+1) H(+)(in) = a plastoquinol + NADP(+) + n H(+)(out). Its function is as follows. NDH shuttles electrons from NAD(P)H:plastoquinone, via FMN and iron-sulfur (Fe-S) centers, to quinones in the photosynthetic chain and possibly in a chloroplast respiratory chain. The immediate electron acceptor for the enzyme in this species is believed to be plastoquinone. Couples the redox reaction to proton translocation, and thus conserves the redox energy in a proton gradient. This chain is NAD(P)H-quinone oxidoreductase subunit 4L, chloroplastic, found in Amborella trichopoda.